Reading from the N-terminus, the 367-residue chain is Glutamate 5-kinase (367 aa).

Lysine 10 provides a ligand contact to ATP. Residues serine 50, aspartate 137, and asparagine 149 each contribute to the substrate site. Residues 169–170 (TD) and 211–217 (TGGMSTK) contribute to the ATP site. The 79-residue stretch at 275-353 (AGEITVDEGA…QEIDAILGYE (79 aa)) folds into the PUA domain.

It belongs to the glutamate 5-kinase family.

It localises to the cytoplasm. The enzyme catalyses L-glutamate + ATP = L-glutamyl 5-phosphate + ADP. Its pathway is amino-acid biosynthesis; L-proline biosynthesis; L-glutamate 5-semialdehyde from L-glutamate: step 1/2. Its function is as follows. Catalyzes the transfer of a phosphate group to glutamate to form L-glutamate 5-phosphate. In Escherichia fergusonii (strain ATCC 35469 / DSM 13698 / CCUG 18766 / IAM 14443 / JCM 21226 / LMG 7866 / NBRC 102419 / NCTC 12128 / CDC 0568-73), this protein is Glutamate 5-kinase.